We begin with the raw amino-acid sequence, 176 residues long: ATP-dependent protease subunit HslV (176 aa).

Residue Thr5 is part of the active site. The Na(+) site is built by Ser161, Cys164, and Thr167.

The protein belongs to the peptidase T1B family. HslV subfamily. A double ring-shaped homohexamer of HslV is capped on each side by a ring-shaped HslU homohexamer. The assembly of the HslU/HslV complex is dependent on binding of ATP.

Its subcellular location is the cytoplasm. The enzyme catalyses ATP-dependent cleavage of peptide bonds with broad specificity.. Its activity is regulated as follows. Allosterically activated by HslU binding. Functionally, protease subunit of a proteasome-like degradation complex believed to be a general protein degrading machinery. This is ATP-dependent protease subunit HslV from Desulfitobacterium hafniense (strain DSM 10664 / DCB-2).